Reading from the N-terminus, the 237-residue chain is Dihydroceramide fatty acyl 2-hydroxylase FAH1 (237 aa).

The next 2 membrane-spanning stretches (helical) occupy residues 50–70 and 80–100; these read LTLT…VWCI and LPEI…FEYV. Zn(2+) is bound by residues histidine 102, histidine 107, histidine 123, histidine 126, and histidine 127. A run of 2 helical transmembrane segments spans residues 137–157 and 164–184; these read VFPP…AKAI and PALF…HYYL. Residues histidine 181, histidine 185, histidine 201, histidine 204, and histidine 205 each contribute to the Zn(2+) site.

Belongs to the sterol desaturase family. In terms of assembly, interacts with CYTB5-A, CYTB5-B, CYTB5-C and CYTB5-D. Interacts indirectly with BI-1 via CYTB5-D. It depends on Zn(2+) as a cofactor. Expressed in leaves, roots, flowers and seeds.

The protein resides in the endoplasmic reticulum membrane. The catalysed reaction is an N-(1,2-saturated acyl)sphinganine + 2 Fe(II)-[cytochrome b5] + O2 + 2 H(+) = an N-[(2'R)-hydroxyacyl]sphinganine + 2 Fe(III)-[cytochrome b5] + H2O. Fatty acid 2-hydroxylase involved in the alpha-hydroxylation of sphingolipid-associated very long-chain fatty acids (VLCFA). Probably involved in the resistance response to oxidative stress. In Arabidopsis thaliana (Mouse-ear cress), this protein is Dihydroceramide fatty acyl 2-hydroxylase FAH1.